The primary structure comprises 237 residues: 1-(5-phosphoribosyl)-5-[(5-phosphoribosylamino)methylideneamino] imidazole-4-carboxamide isomerase (237 aa).

The active-site Proton acceptor is the Asp8. Asp129 acts as the Proton donor in catalysis.

This sequence belongs to the HisA/HisF family.

It is found in the cytoplasm. It catalyses the reaction 1-(5-phospho-beta-D-ribosyl)-5-[(5-phospho-beta-D-ribosylamino)methylideneamino]imidazole-4-carboxamide = 5-[(5-phospho-1-deoxy-D-ribulos-1-ylimino)methylamino]-1-(5-phospho-beta-D-ribosyl)imidazole-4-carboxamide. It functions in the pathway amino-acid biosynthesis; L-histidine biosynthesis; L-histidine from 5-phospho-alpha-D-ribose 1-diphosphate: step 4/9. This chain is 1-(5-phosphoribosyl)-5-[(5-phosphoribosylamino)methylideneamino] imidazole-4-carboxamide isomerase, found in Dehalococcoides mccartyi (strain ATCC BAA-2266 / KCTC 15142 / 195) (Dehalococcoides ethenogenes (strain 195)).